The following is a 271-amino-acid chain: Chorismate dehydratase (271 aa).

The protein belongs to the MqnA/MqnD family. MqnA subfamily.

It carries out the reaction chorismate = 3-[(1-carboxyvinyl)-oxy]benzoate + H2O. It participates in quinol/quinone metabolism; menaquinone biosynthesis. In terms of biological role, catalyzes the dehydration of chorismate into 3-[(1-carboxyvinyl)oxy]benzoate, a step in the biosynthesis of menaquinone (MK, vitamin K2). This is Chorismate dehydratase from Thermus thermophilus (strain ATCC 27634 / DSM 579 / HB8).